Here is a 698-residue protein sequence, read N- to C-terminus: Elongation factor G (698 aa).

One can recognise a tr-type G domain in the interval 10-285; that stretch reads AATRNIGIMA…AVVDFLPSPT (276 aa). Residues 19-26, 83-87, and 137-140 each bind GTP; these read AHIDAGKT, DTPGH, and NKMD.

This sequence belongs to the TRAFAC class translation factor GTPase superfamily. Classic translation factor GTPase family. EF-G/EF-2 subfamily.

The protein resides in the cytoplasm. Functionally, catalyzes the GTP-dependent ribosomal translocation step during translation elongation. During this step, the ribosome changes from the pre-translocational (PRE) to the post-translocational (POST) state as the newly formed A-site-bound peptidyl-tRNA and P-site-bound deacylated tRNA move to the P and E sites, respectively. Catalyzes the coordinated movement of the two tRNA molecules, the mRNA and conformational changes in the ribosome. In Parafrankia sp. (strain EAN1pec), this protein is Elongation factor G.